A 151-amino-acid chain; its full sequence is Caveolin-3 (151 aa).

Residues methionine 1 to proline 83 are Cytoplasmic-facing. A Glycyl lysine isopeptide (Lys-Gly) (interchain with G-Cter in SUMO3) cross-link involves residue lysine 38. A required for interaction with DAG1 region spans residues threonine 64–isoleucine 114. The segment at residues leucine 84–valine 104 is an intramembrane region (helical). Over proline 105–glycine 151 the chain is Cytoplasmic.

The protein belongs to the caveolin family. In terms of assembly, homooligomer. Interacts with DYSF. Interacts with DLG1 and KCNA5; forms a ternary complex. Interacts with DAG1 (via its C-terminal); the interaction prevents binding of DAG1 with DMD. Interacts with TRIM72. Interacts with MUSK; may regulate MUSK signaling. Interacts with POPDC1. Interacts with CAVIN1, CAVIN2 and CAVIN4. In terms of processing, sumoylation with SUMO3 by PIAS4 may reduce agonist-induced internalization and desensitization of adrenergic receptor ABRD2. Expressed predominantly in muscle.

It is found in the golgi apparatus membrane. It localises to the cell membrane. The protein localises to the membrane. The protein resides in the caveola. Its subcellular location is the sarcolemma. In terms of biological role, may act as a scaffolding protein within caveolar membranes. Interacts directly with G-protein alpha subunits and can functionally regulate their activity. May also regulate voltage-gated potassium channels. Plays a role in the sarcolemma repair mechanism of both skeletal muscle and cardiomyocytes that permits rapid resealing of membranes disrupted by mechanical stress. Mediates the recruitment of CAVIN2 and CAVIN3 proteins to the caveolae. This chain is Caveolin-3, found in Mus musculus (Mouse).